A 723-amino-acid chain; its full sequence is Nuclear intron maturase 3, mitochondrial (723 aa).

Residues 1-26 constitute a mitochondrion transit peptide; it reads MVLRLRVHSFYNRGISFLVSSSLRNL. The intron maturase type-2; degenerate stretch occupies residues 532-597; that stretch reads VSAPEELVRK…HYTKDLRVSD (66 aa). The THAP-type zinc-finger motif lies at 646–700; the sequence is CAASFCERSDTIMHRVHLLQNRLHINPLDEEKWVPGMGTIHSALNRKCLPLCSTH.

It belongs to the plant nuclear intron maturase (nMat) family.

The protein localises to the mitochondrion. In terms of biological role, nuclear-encoded maturase required for splicing of group-II introns in mitochondria. Necessary for mitochondrial biogenesis during early developmental stages. In Arabidopsis thaliana (Mouse-ear cress), this protein is Nuclear intron maturase 3, mitochondrial.